The chain runs to 497 residues: MGYKFLKLASASFRNGGVRIVSRQYSTTHDADLVVIGAGPGGYVAAIKAAQLGMKVVSVEKEPSLGGTCLNVGCIPSKALLHNTHLYHMAKHDFKHRGIETGEVKFNFKAMMDYKVNAVKALTGGIAMLFQKNKVKLVRGAGTIVAPNKVEVKGEKGVETVNTKNILIATGSEVTPFPGVTFDEKQIITSTGALSLESVPKKMLVIGAGVIGLELGSVYQRLGADVTAIEFLGSIGGIGIDMEVSKDYRILAKQGMKFKLETKVLGVKKEGSTVKVEDVSIEGAKGGNKETMDCDVVLISIGRRPYTKDLGLDKVGIALDDRGRVPVNNKFQTTVPGIYAIGDVIHGPMLAHKAEDEGIVCVEGIKGMPVHFNYDAIPSVIYTSPEVGWVRKTEEDLKKEGKAYKVRKFPFLANSRAKTNGEPDGFVKVLSDKATDVILGTHIIGPGGGELINEAVLAQEYGAAAEDVARVCHAHPTCAEALREANLAAYCGKPINF.

Residues 60-69, lysine 78, glycine 142, and 170-172 each bind FAD; these read EKEPSLGGTC and TGS. The cysteines at positions 69 and 74 are disulfide-linked. Residues 207-214, glutamate 230, valine 264, and glycine 302 contribute to the NAD(+) site; that span reads GAGVIGLE. Residues aspartate 343 and 349–352 each bind FAD; that span reads MLAH. The Proton acceptor role is filled by histidine 475.

This sequence belongs to the class-I pyridine nucleotide-disulfide oxidoreductase family. In terms of assembly, homodimer. FAD is required as a cofactor.

Its subcellular location is the cytoplasm. The enzyme catalyses N(6)-[(R)-dihydrolipoyl]-L-lysyl-[protein] + NAD(+) = N(6)-[(R)-lipoyl]-L-lysyl-[protein] + NADH + H(+). In Manduca sexta (Tobacco hawkmoth), this protein is Dihydrolipoyl dehydrogenase.